The primary structure comprises 267 residues: MKLVKPKKFLGQHFLKDLKVAQDIADTVDTFPELPVLEVGPGMGVLTQFLVKKDRLVKVVEVDYESVAYLREAYPSLEDHIIEDDFLKMNLHRLFDGKPFVLTGNYPYNISSQIFFKMLENKDIIPCCTGMIQKEVAERIAAGPGSKTYGILSVLIQAWYKVEYLFTVSEHVFNPPPKVKSAVIRMTRNDTKELGCDEKLFKQVVKTTFNQRRKTLRNSIKPILGKDCPLTEDALFNKRPEQLSVEEFISLTNQVEEALKTATASGN.

Residues H13, L15, G40, E61, D85, and N105 each contribute to the S-adenosyl-L-methionine site.

This sequence belongs to the class I-like SAM-binding methyltransferase superfamily. rRNA adenine N(6)-methyltransferase family. RsmA subfamily.

It localises to the cytoplasm. The enzyme catalyses adenosine(1518)/adenosine(1519) in 16S rRNA + 4 S-adenosyl-L-methionine = N(6)-dimethyladenosine(1518)/N(6)-dimethyladenosine(1519) in 16S rRNA + 4 S-adenosyl-L-homocysteine + 4 H(+). Its function is as follows. Specifically dimethylates two adjacent adenosines (A1518 and A1519) in the loop of a conserved hairpin near the 3'-end of 16S rRNA in the 30S particle. May play a critical role in biogenesis of 30S subunits. This is Ribosomal RNA small subunit methyltransferase A from Bacteroides thetaiotaomicron (strain ATCC 29148 / DSM 2079 / JCM 5827 / CCUG 10774 / NCTC 10582 / VPI-5482 / E50).